The following is a 652-amino-acid chain: Inactive leucine-rich repeat receptor-like serine/threonine-protein kinase At1g60630 (652 aa).

Positions 1–23 (MISSSSCMFFLVFAFFLISPVRS) are cleaved as a signal peptide. Residues 24 to 256 (SDVEALLSLK…SRTKLIGIIS (233 aa)) lie on the Extracellular side of the membrane. LRR repeat units follow at residues 64–84 (SKLVLENLNLSGSLNGKSLNQ), 85–108 (LDQLRVLSFKGNSLSGSIPNLSGL), 109–132 (VNLKSLYLNDNNFSGEFPESLTSL), 134–156 (RLKTVVLSRNRFSGKIPSSLLRL), 158–178 (RLYTFYVQDNLFSGSIPPLNQ), and 179–203 (ATLRFFNVSNNQLSGHIPPTQALNR). N-linked (GlcNAc...) asparagine glycosylation is found at Asn-72, Asn-104, and Asn-120. N-linked (GlcNAc...) asparagine glycans are attached at residues Asn-185, Asn-205, and Asn-225. Residues 257–277 (GSICGGILILLLTFLLICLLW) form a helical membrane-spanning segment. The Cytoplasmic segment spans residues 278–652 (RRKRSKSKRE…SLPREDHMSI (375 aa)). A disordered region spans residues 286-321 (REERRSKRVAESKEAKTAETEEGTSDQKNKRFSWEK). The Protein kinase domain maps to 350-624 (KASAETLGRG…VKDARAEAAL (275 aa)). Ser-352 is modified (phosphoserine). ATP-binding positions include 356 to 364 (LGRGTLGST) and Lys-378. A phosphoserine mark is found at Ser-430 and Ser-433. Residue Thr-509 is modified to Phosphothreonine. The segment at 630-652 (SDHSPGRWSDTIQSLPREDHMSI) is disordered.

It belongs to the protein kinase superfamily. Ser/Thr protein kinase family.

The protein resides in the cell membrane. The chain is Inactive leucine-rich repeat receptor-like serine/threonine-protein kinase At1g60630 from Arabidopsis thaliana (Mouse-ear cress).